We begin with the raw amino-acid sequence, 446 residues long: MTTILENLPAGQKVGIAFSGGLDTSAALHWMRIKGAVPYAYTANLGQPDEDDYDAIPKRAIQYGAEGARLIDCRAQLVAEGIAALQCGAFHISTAGVTYFNTTPIGRAVTGTMLVAAMKEDGVNIWGDGSTYKGNDIERFYRYGLLVNPDLKIYKPWLDQQFIDELGGRAEMSEFMRQAGFEYKMSAEKAYSTDSNLLGATHEAKDLESLESGIKIVNPIMGVAFWRDDVKIDKEAVTVRFEEGRPVALNGVEYKDAVELLLEANRIGGRHGLGMSDQIENRIIEAKSRGIYEAPGLALLYIAYERLVTGIHNEDTIEQYRENGRRLGRLLYQGRWFDPQAIMLRETAQRWVARAVTGEVTVELRRGNDYSILATRSPNLTYQPERLSMEKVQSTFSPRDRIGQLTMRNLDITDTRDKLRIYSEVGLLTPGESSALPKLKEDESGN.

ATP contacts are provided by residues 17–25 and A43; that span reads AFSGGLDTS. Residue Y99 participates in L-citrulline binding. ATP is bound by residues G129 and T131. Residues T131, N135, and D136 each coordinate L-aspartate. An L-citrulline-binding site is contributed by N135. D136 is a binding site for ATP. Residues R139 and S192 each coordinate L-citrulline. An ATP-binding site is contributed by D194. T201, E203, and E280 together coordinate L-citrulline.

This sequence belongs to the argininosuccinate synthase family. Type 2 subfamily. In terms of assembly, homotetramer.

The protein localises to the cytoplasm. It catalyses the reaction L-citrulline + L-aspartate + ATP = 2-(N(omega)-L-arginino)succinate + AMP + diphosphate + H(+). The protein operates within amino-acid biosynthesis; L-arginine biosynthesis; L-arginine from L-ornithine and carbamoyl phosphate: step 2/3. The chain is Argininosuccinate synthase from Burkholderia thailandensis (strain ATCC 700388 / DSM 13276 / CCUG 48851 / CIP 106301 / E264).